We begin with the raw amino-acid sequence, 337 residues long: Ketol-acid reductoisomerase (NADP(+)) (337 aa).

Positions Val3–Thr183 constitute a KARI N-terminal Rossmann domain. Residues Tyr26–Gln29, Ser52, Ser54, and Asp84–Gln87 each bind NADP(+). His109 is a catalytic residue. NADP(+) is bound at residue Gly135. The KARI C-terminal knotted domain occupies Thr184–Val329. Mg(2+) is bound by residues Asp192, Glu196, Glu228, and Glu232. Ser253 is a binding site for substrate.

Belongs to the ketol-acid reductoisomerase family. It depends on Mg(2+) as a cofactor.

It catalyses the reaction (2R)-2,3-dihydroxy-3-methylbutanoate + NADP(+) = (2S)-2-acetolactate + NADPH + H(+). The catalysed reaction is (2R,3R)-2,3-dihydroxy-3-methylpentanoate + NADP(+) = (S)-2-ethyl-2-hydroxy-3-oxobutanoate + NADPH + H(+). Its pathway is amino-acid biosynthesis; L-isoleucine biosynthesis; L-isoleucine from 2-oxobutanoate: step 2/4. It participates in amino-acid biosynthesis; L-valine biosynthesis; L-valine from pyruvate: step 2/4. Functionally, involved in the biosynthesis of branched-chain amino acids (BCAA). Catalyzes an alkyl-migration followed by a ketol-acid reduction of (S)-2-acetolactate (S2AL) to yield (R)-2,3-dihydroxy-isovalerate. In the isomerase reaction, S2AL is rearranged via a Mg-dependent methyl migration to produce 3-hydroxy-3-methyl-2-ketobutyrate (HMKB). In the reductase reaction, this 2-ketoacid undergoes a metal-dependent reduction by NADPH to yield (R)-2,3-dihydroxy-isovalerate. This chain is Ketol-acid reductoisomerase (NADP(+)), found in Salinispora arenicola (strain CNS-205).